A 387-amino-acid chain; its full sequence is Chromatin modification-related protein EAF3 (387 aa).

The interval N52–L96 is disordered. Basic and acidic residues predominate over residues S76 to V92. Positions N100–V126 constitute a Tudor-knot domain. Residues P159–L197 form a disordered region. Residues K211–K385 form the MRG domain.

Belongs to the MRG family. As to quaternary structure, component of the NuA4 histone acetyltransferase complex.

Its subcellular location is the nucleus. Functionally, involved in deacetylation of histones, chromatin assembly and chromosome segregation. May act as a transcriptional oscillator, directing histone deacetylases to specific chromosomal domains. Component of the NuA4 histone acetyltransferase complex which is involved in transcriptional activation of selected genes principally by acetylation of nucleosomal histone H4 and H2A. The NuA4 complex is also involved in DNA repair. This Yarrowia lipolytica (strain CLIB 122 / E 150) (Yeast) protein is Chromatin modification-related protein EAF3 (EAF3).